Consider the following 178-residue polypeptide: 2-C-methyl-D-erythritol 2,4-cyclodiphosphate synthase (178 aa).

A divalent metal cation is bound by residues D24, H26, and H61. Residue 24–26 (DSH) participates in 4-CDP-2-C-methyl-D-erythritol 2-phosphate binding. 150 to 153 (TSGE) lines the 4-CDP-2-C-methyl-D-erythritol 2-phosphate pocket.

The protein belongs to the IspF family. As to quaternary structure, homotrimer. A divalent metal cation serves as cofactor.

The enzyme catalyses 4-CDP-2-C-methyl-D-erythritol 2-phosphate = 2-C-methyl-D-erythritol 2,4-cyclic diphosphate + CMP. It participates in isoprenoid biosynthesis; isopentenyl diphosphate biosynthesis via DXP pathway; isopentenyl diphosphate from 1-deoxy-D-xylulose 5-phosphate: step 4/6. In terms of biological role, involved in the biosynthesis of isopentenyl diphosphate (IPP) and dimethylallyl diphosphate (DMAPP), two major building blocks of isoprenoid compounds. Catalyzes the conversion of 4-diphosphocytidyl-2-C-methyl-D-erythritol 2-phosphate (CDP-ME2P) to 2-C-methyl-D-erythritol 2,4-cyclodiphosphate (ME-CPP) with a corresponding release of cytidine 5-monophosphate (CMP). This Chlamydia trachomatis serovar L2b (strain UCH-1/proctitis) protein is 2-C-methyl-D-erythritol 2,4-cyclodiphosphate synthase.